Reading from the N-terminus, the 1608-residue chain is Hemolysin (1608 aa).

The N-terminal stretch at 1 to 30 (MKNNNFRLSAAGKLAAALAIILAASAGAYA) is a signal peptide. Disordered regions lie at residues 296 to 315 (SRVD…QNYR), 452 to 488 (KSSE…LRSE), 716 to 737 (EHTR…LSGG), 971 to 1030 (AVNL…SASQ), 1168 to 1199 (AEST…TGGN), and 1437 to 1469 (PQQD…QGPL). Polar residues-rich tracts occupy residues 303-313 (SNKNGGDNYQN) and 460-474 (RNHT…WSNS). Basic and acidic residues-rich tracts occupy residues 478-488 (ESLKASELRSE) and 716-726 (EHTRDSEKTTR). Over residues 727–736 (TENSASSLSG) the composition is skewed to polar residues. Residues 977 to 996 (DSHRSEAAANRQDEQSRDTR) are compositionally biased toward basic and acidic residues. The segment covering 1021 to 1030 (TQRSNSSASQ) has biased composition (polar residues).

Its subcellular location is the cell outer membrane. Its function is as follows. Bacterial hemolysins are exotoxins that attack blood cell membranes and cause cell rupture by mechanisms not clearly defined. In terms of biological role, cell-bound hemolysin, which releases heme-iron from erythrocytes by interaction with the erythrocyte membrane. ShlA requires ShlB function. The sequence is that of Hemolysin (shlA) from Serratia marcescens.